We begin with the raw amino-acid sequence, 353 residues long: Serine/threonine-protein phosphatase 2A activator 1 (353 aa).

Residues 331-353 (ANNATTKMPPPLSTSTSRFIHRR) form a disordered region. Over residues 343-353 (STSTSRFIHRR) the composition is skewed to polar residues.

It belongs to the PTPA-type PPIase family.

It localises to the cytoplasm. The protein resides in the nucleus. The enzyme catalyses [protein]-peptidylproline (omega=180) = [protein]-peptidylproline (omega=0). Functionally, PPIases accelerate the folding of proteins. It catalyzes the cis-trans isomerization of proline imidic peptide bonds in oligopeptides. Acts as a regulatory subunit for PP2A-like phosphatases modulating their activity or substrate specificity, probably by inducing a conformational change in the catalytic subunit, a direct target of the PPIase. Can reactivate inactive phosphatase PP2A-phosphatase methylesterase complexes (PP2Ai) in presence of ATP and Mg(2+) by dissociating the inactive form from the complex. This chain is Serine/threonine-protein phosphatase 2A activator 1 (RRD1), found in Kluyveromyces lactis (strain ATCC 8585 / CBS 2359 / DSM 70799 / NBRC 1267 / NRRL Y-1140 / WM37) (Yeast).